Reading from the N-terminus, the 92-residue chain is Small ribosomal subunit protein bS6 (92 aa).

Belongs to the bacterial ribosomal protein bS6 family.

Binds together with bS18 to 16S ribosomal RNA. The protein is Small ribosomal subunit protein bS6 of Clostridioides difficile (strain 630) (Peptoclostridium difficile).